A 125-amino-acid chain; its full sequence is uncharacterized protein (125 aa).

The helical transmembrane segment at 10 to 26 (IIILVCLMFLAIMVYIY) threads the bilayer.

Its subcellular location is the membrane. This is an uncharacterized protein from Rickettsia prowazekii (strain Madrid E).